Consider the following 978-residue polypeptide: METKGYHSLPEGLDMERRWSQVSQTLERSSLGPAERTNENSYMEIVNVSCVSGATPNNSTQGSSKEKHELLPCLQQDNSRSGILPSDIKTELESKELSATVAESMGLYMDSVRDAEYTYDQQNQQGSLSPAKIYQNMEQLVKFYKENGHRSSTLSAISRPLRSFMPDSGTSMNGGALRAIVKSPIICHEKSPSVCSPLNMPSSVCSPAGINSMSSSTASFGSFPVHSPITQGTSLTCSPSVENRGSRSHSPVHASNVGSPLSSPLSSMKSPISSPPSHCSVKSPVSSPNNVPLRSSVSSPANLNNSRCSVSSPSNTNNRSTLSSPTASTVGSIGSPISNAFSYTTSGASAGAGAIQDMVPSPDTHEKGAHDVPFPKTEEVEKAISNGVTGQLNIVQYIKPEPDGAFSSSCLGGNNKINPSSPFSVPIKQESSKHSCSGASFKGNPTVNPFPFMDGSYFSFMDDKDYYSLSGILGPPVPGFDSSCEGSAFPGGIKQEPDDGSYFPETSIPSSAIIGVNSGGQSFHYRIGAQGTISLSRSPRDQSFQHLSSFPPVNALVESWKPHGDLSSRRSDGYPVLEYIPENVSSSTLRSVSTGSSRPSKICLVCGDEASGCHYGVVTCGSCKVFFKRAVEHNYLCAGRNDCIIDKIRRKNCPACRLQKCLQAGMNLGARKSKKLGKLKGLHEEQPQQPPPPPPQSPEEGTTYIAPTKEPSVNSALVPQLASITRALTPSPSMILENIEPEIVYAGYDNSKPDTAESLLSTLNRLAGKQMIQVVKWAKVLPGFKNLPLEDQITLIQYSWMCLSSFALSWRSYKHTNSQFLYFAPDLVFNEEKMHQSAMYELCQGMRQISLQFVRLQLTFEEYSIMKVLLLLSTVPKDGLKSQAAFEEMRTNYIKELRKMVTKCPNSSGQSWQRFYQLTKLLDSMHDLVNDLLEFCFYTFRESQALKVEFPAMLVEIISDQLPKVESGNAKPLYFHRK.

The segment at 1-602 (METKGYHSLP…STGSSRPSKI (602 aa)) is modulating. Residues 234–243 (SLTCSPSVEN) show a composition bias toward polar residues. Disordered regions lie at residues 234–331 (SLTC…STVG) and 353–372 (GAIQDMVPSPDTHEKGAHDV). A phosphoserine mark is found at Ser250, Ser259, Ser283, Ser287, and Ser299. Residues 259–300 (SPLSSPLSSMKSPISSPPSHCSVKSPVSSPNNVPLRSSVSSP) show a composition bias toward low complexity. Positions 301–331 (ANLNNSRCSVSSPSNTNNRSTLSSPTASTVG) are enriched in polar residues. Cys603, Cys606, Cys620, Cys623, Cys637, Cys643, Cys653, and Cys656 together coordinate Zn(2+). 2 consecutive NR C4-type zinc fingers follow at residues 603-623 (CLVCGDEASGCHYGVVTCGSC) and 637-661 (CAGRNDCIIDKIRRKNCPACRLQKC). The segment at residues 603-666 (CLVCGDEASG…RLQKCLQAGM (64 aa)) is a DNA-binding region (nuclear receptor). The segment at 667 to 719 (NLGARKSKKLGKLKGLHEEQPQQPPPPPPQSPEEGTTYIAPTKEPSVNSALVP) is hinge. Positions 681 to 706 (GLHEEQPQQPPPPPPQSPEEGTTYIA) are disordered. The segment covering 688–697 (QQPPPPPPQS) has biased composition (pro residues). Residues 720-958 (QLASITRALT…EFPAMLVEII (239 aa)) enclose the NR LBD domain. The 21-hydroxyprogesterone site is built by Asn764 and Gln770. 2 residues coordinate aldosterone: Asn764 and Gln770. The progesterone site is built by Asn764 and Gln770. The interval 776–779 (KWAK) is important for coactivator binding. 2 residues coordinate 21-hydroxyprogesterone: Arg811 and Thr939. Positions 811 and 939 each coordinate aldosterone. 2 residues coordinate progesterone: Arg811 and Thr939.

It belongs to the nuclear hormone receptor family. NR3 subfamily. As to quaternary structure, heteromultimeric cytoplasmic complex with HSP90, HSP70, and FKBP4, in the absence of ligand. After ligand binding, it translocates to the nucleus and binds to DNA as a homodimer and as a heterodimer with NR3C1. Binds the coactivator NCOA2. May interact with HSD11B2 in the absence of ligand. Binds the coactivators NCOA1, TIF1 and NRIP1. Phosphorylated. In terms of tissue distribution, expressed in heart and kidney.

It localises to the cytoplasm. The protein resides in the nucleus. The protein localises to the endoplasmic reticulum membrane. Receptor for both mineralocorticoids (MC) such as aldosterone and glucocorticoids (GC) such as corticosterone or cortisol. Binds to mineralocorticoid response elements (MRE) and transactivates target genes. The effect of MC is to increase ion and water transport and thus raise extracellular fluid volume and blood pressure and lower potassium levels. The polypeptide is Mineralocorticoid receptor (Nr3c2) (Mus musculus (Mouse)).